A 148-amino-acid chain; its full sequence is Lipoprotein MlpH (148 aa).

Residues methionine 1–glycine 17 form the signal peptide. The N-palmitoyl cysteine moiety is linked to residue cysteine 18. Residue cysteine 18 is the site of S-diacylglycerol cysteine attachment. Residues leucine 26 to lysine 61 are disordered. The span at aspartate 40 to lysine 61 shows a compositional bias: basic and acidic residues.

It belongs to the Multicopy lipoprotein (Mlp) family.

Its subcellular location is the cell outer membrane. Its function is as follows. An outer membrane protein that may participate in pathogenesis. Some human Lyme disease patients have antibodies against this protein. The Mlp proteins probably undergo intragenic recombination, generating new alleles. This chain is Lipoprotein MlpH, found in Borreliella burgdorferi (strain ATCC 35210 / DSM 4680 / CIP 102532 / B31) (Borrelia burgdorferi).